The chain runs to 147 residues: Hemoglobin subunit gamma (147 aa).

One can recognise a Globin domain in the interval 3–147 (NFTAEDKAAI…VASALASRYH (145 aa)). Heme b is bound by residues H64 and H93.

Belongs to the globin family. Heterotetramer of two alpha chains and two gamma chains in fetal hemoglobin (Hb F). As to expression, red blood cells.

Functionally, gamma chains make up the fetal hemoglobin F, in combination with alpha chains. The chain is Hemoglobin subunit gamma (HBG) from Alouatta seniculus (Red howler monkey).